Reading from the N-terminus, the 610-residue chain is UvrABC system protein C (610 aa).

In terms of domain architecture, GIY-YIG spans 16–94 (SQPGVYRMYD…IKLYQPRYNV (79 aa)). The UVR domain occupies 204–239 (DQVLTQLISRMETASQNLEFEEAARIRDQIQAVRRV).

Belongs to the UvrC family. Interacts with UvrB in an incision complex.

The protein resides in the cytoplasm. Its function is as follows. The UvrABC repair system catalyzes the recognition and processing of DNA lesions. UvrC both incises the 5' and 3' sides of the lesion. The N-terminal half is responsible for the 3' incision and the C-terminal half is responsible for the 5' incision. This chain is UvrABC system protein C, found in Escherichia coli O139:H28 (strain E24377A / ETEC).